Reading from the N-terminus, the 359-residue chain is Quinolinate synthase (359 aa).

Iminosuccinate contacts are provided by histidine 81 and serine 99. Cysteine 144 serves as a coordination point for [4Fe-4S] cluster. Residues 170-172 (YVN) and serine 187 each bind iminosuccinate. Residue cysteine 229 participates in [4Fe-4S] cluster binding. Residues 255 to 257 (HPE) and threonine 272 each bind iminosuccinate. Cysteine 315 serves as a coordination point for [4Fe-4S] cluster.

It belongs to the quinolinate synthase family. Type 2 subfamily. Requires [4Fe-4S] cluster as cofactor.

It localises to the cytoplasm. It carries out the reaction iminosuccinate + dihydroxyacetone phosphate = quinolinate + phosphate + 2 H2O + H(+). It participates in cofactor biosynthesis; NAD(+) biosynthesis; quinolinate from iminoaspartate: step 1/1. Catalyzes the condensation of iminoaspartate with dihydroxyacetone phosphate to form quinolinate. The sequence is that of Quinolinate synthase from Sinorhizobium medicae (strain WSM419) (Ensifer medicae).